An 811-amino-acid polypeptide reads, in one-letter code: Receptor-like protein 46 (811 aa).

The signal sequence occupies residues 1–21 (MSKQCLLSCFLFFCFFIPQLS). Topologically, residues 22–782 (FSCPQDQRQS…EEEDKEEEET (761 aa)) are extracellular. Asn-46, Asn-71, Asn-128, and Asn-143 each carry an N-linked (GlcNAc...) asparagine glycan. LRR repeat units lie at residues 104-128 (INSLVGLDVSFNNIQGEIPGYAFVN), 129-153 (LTSLISLDMCCNRFNGSIPHELFSL), 155-177 (NLQRLDLSRNVIGGTLSGDIKEL), 178-201 (KNLQELILDENLIGGAIPSEIGSL), 203-225 (ELLTLTLRQNMFNSSIPSSVSRL), 226-249 (TKLKTIDLQNNFLSSKIPDDIGNL), 251-273 (NLSTLSLSMNKLSGGIPSSIHNL), 275-298 (NLETLQLENNNGLSGEIPAAWLFG), 299-322 (LQKLKVLRLEGNNKLQWNNNGYVF), 324-348 (QFKLTHLSLRSCGLEGNIPDWLKNQ), 349-369 (TALVYLDLSINRLEGRFPKWL), 370-395 (ADLKIRNITLSDNRLTGSLPPNLFQR), 397-419 (SLYYLVLSRNNFSGQIPDTIGES), 421-442 (VMVLMLSENNFSGSVPKSITKI), 443-466 (PFLKLLDLSKNRLSGEFPRFRPES), 468-488 (LEWLDISSNEFSGDVPAYFGG), 490-510 (TSMLLMSQNNFSGEFPQNFRN), 511-534 (LSYLIRLDLHDNKISGTVASLISQ), 536-560 (SSSVEVLSLRNNSLKGSIPEGISNL), 561-583 (TSLKVLDLSENNLDGYLPSSLGN), 643-665 (LYTLLDLSKNKLHGEIPTSLGNL), 666-688 (KSLKVLNLSNNEFSGLIPQSFGD), 690-713 (EKVESLDLSHNNLTGEIPKTLSKL), and 714-738 (SELNTLDLRNNKLKGRIPESPQLDR). Asn-215 carries an N-linked (GlcNAc...) asparagine glycan. An N-linked (GlcNAc...) asparagine glycan is attached at Asn-251. Asn-347 is a glycosylation site (N-linked (GlcNAc...) asparagine). Residues Asn-376, Asn-407, and Asn-430 are each glycosylated (N-linked (GlcNAc...) asparagine). Residues Asn-499 and Asn-510 are each glycosylated (N-linked (GlcNAc...) asparagine). Residues Asn-546, Asn-559, and Asn-583 are each glycosylated (N-linked (GlcNAc...) asparagine). Asn-672 and Asn-701 each carry an N-linked (GlcNAc...) asparagine glycan. N-linked (GlcNAc...) asparagine glycosylation occurs at Asn-747. Residues 783–803 (IFSWNAAAIGCSCGFLIAVVF) form a helical membrane-spanning segment. Residues 804-811 (MSYNELWK) are Cytoplasmic-facing.

This sequence belongs to the RLP family.

The protein localises to the cell membrane. The protein is Receptor-like protein 46 of Arabidopsis thaliana (Mouse-ear cress).